The primary structure comprises 133 residues: ATP synthase epsilon chain, chloroplastic (133 aa).

The protein belongs to the ATPase epsilon chain family. As to quaternary structure, F-type ATPases have 2 components, CF(1) - the catalytic core - and CF(0) - the membrane proton channel. CF(1) has five subunits: alpha(3), beta(3), gamma(1), delta(1), epsilon(1). CF(0) has three main subunits: a, b and c.

It is found in the plastid. The protein localises to the chloroplast thylakoid membrane. In terms of biological role, produces ATP from ADP in the presence of a proton gradient across the membrane. This is ATP synthase epsilon chain, chloroplastic from Morus indica (Mulberry).